The chain runs to 425 residues: Serine--tRNA ligase (425 aa).

228–230 is an L-serine binding site; that stretch reads TAE. Position 259–261 (259–261) interacts with ATP; it reads RSE. Residue E282 coordinates L-serine. 346-349 lines the ATP pocket; the sequence is EIAS. Residue S382 coordinates L-serine.

It belongs to the class-II aminoacyl-tRNA synthetase family. Type-1 seryl-tRNA synthetase subfamily. As to quaternary structure, homodimer. The tRNA molecule binds across the dimer.

It is found in the cytoplasm. The enzyme catalyses tRNA(Ser) + L-serine + ATP = L-seryl-tRNA(Ser) + AMP + diphosphate + H(+). It catalyses the reaction tRNA(Sec) + L-serine + ATP = L-seryl-tRNA(Sec) + AMP + diphosphate + H(+). Its pathway is aminoacyl-tRNA biosynthesis; selenocysteinyl-tRNA(Sec) biosynthesis; L-seryl-tRNA(Sec) from L-serine and tRNA(Sec): step 1/1. Catalyzes the attachment of serine to tRNA(Ser). Is also able to aminoacylate tRNA(Sec) with serine, to form the misacylated tRNA L-seryl-tRNA(Sec), which will be further converted into selenocysteinyl-tRNA(Sec). The sequence is that of Serine--tRNA ligase from Rickettsia rickettsii (strain Iowa).